The sequence spans 224 residues: Octanoyltransferase (224 aa).

In terms of domain architecture, BPL/LPL catalytic spans 29-224 (PGTPDELWLC…GDRLESYLSP (196 aa)). Substrate contacts are provided by residues 68 to 75 (RGGQVTYH), 157 to 159 (ALG), and 170 to 172 (GLA). The active-site Acyl-thioester intermediate is Cys-188.

This sequence belongs to the LipB family.

It localises to the cytoplasm. It carries out the reaction octanoyl-[ACP] + L-lysyl-[protein] = N(6)-octanoyl-L-lysyl-[protein] + holo-[ACP] + H(+). It functions in the pathway protein modification; protein lipoylation via endogenous pathway; protein N(6)-(lipoyl)lysine from octanoyl-[acyl-carrier-protein]: step 1/2. Its function is as follows. Catalyzes the transfer of endogenously produced octanoic acid from octanoyl-acyl-carrier-protein onto the lipoyl domains of lipoate-dependent enzymes. Lipoyl-ACP can also act as a substrate although octanoyl-ACP is likely to be the physiological substrate. In Methylibium petroleiphilum (strain ATCC BAA-1232 / LMG 22953 / PM1), this protein is Octanoyltransferase.